A 364-amino-acid chain; its full sequence is Methylthioribose-1-phosphate isomerase (364 aa).

Residues 53–55 (RGA), Arg90, and Gln203 contribute to the substrate site. Asp244 (proton donor) is an active-site residue. Substrate is bound at residue 254-255 (NK).

This sequence belongs to the eIF-2B alpha/beta/delta subunits family. MtnA subfamily.

It catalyses the reaction 5-(methylsulfanyl)-alpha-D-ribose 1-phosphate = 5-(methylsulfanyl)-D-ribulose 1-phosphate. The protein operates within amino-acid biosynthesis; L-methionine biosynthesis via salvage pathway; L-methionine from S-methyl-5-thio-alpha-D-ribose 1-phosphate: step 1/6. Catalyzes the interconversion of methylthioribose-1-phosphate (MTR-1-P) into methylthioribulose-1-phosphate (MTRu-1-P). The sequence is that of Methylthioribose-1-phosphate isomerase from Brucella anthropi (strain ATCC 49188 / DSM 6882 / CCUG 24695 / JCM 21032 / LMG 3331 / NBRC 15819 / NCTC 12168 / Alc 37) (Ochrobactrum anthropi).